A 105-amino-acid chain; its full sequence is MTTETFDGVRLTTKANVYFDGKCVSHSFTLPDGTKKSVGVVLPATLTFGTAAAEIMECVGGSCEYKLDGTDEWKTSGAGDSFQVPANSKFDIRVTEAYHYICHYA.

It belongs to the nucleoside phosphorylase PpnP family.

The catalysed reaction is a purine D-ribonucleoside + phosphate = a purine nucleobase + alpha-D-ribose 1-phosphate. It carries out the reaction adenosine + phosphate = alpha-D-ribose 1-phosphate + adenine. It catalyses the reaction cytidine + phosphate = cytosine + alpha-D-ribose 1-phosphate. The enzyme catalyses guanosine + phosphate = alpha-D-ribose 1-phosphate + guanine. The catalysed reaction is inosine + phosphate = alpha-D-ribose 1-phosphate + hypoxanthine. It carries out the reaction thymidine + phosphate = 2-deoxy-alpha-D-ribose 1-phosphate + thymine. It catalyses the reaction uridine + phosphate = alpha-D-ribose 1-phosphate + uracil. The enzyme catalyses xanthosine + phosphate = alpha-D-ribose 1-phosphate + xanthine. In terms of biological role, catalyzes the phosphorolysis of diverse nucleosides, yielding D-ribose 1-phosphate and the respective free bases. Can use uridine, adenosine, guanosine, cytidine, thymidine, inosine and xanthosine as substrates. Also catalyzes the reverse reactions. The polypeptide is Pyrimidine/purine nucleoside phosphorylase (Ralstonia pickettii (strain 12J)).